Reading from the N-terminus, the 359-residue chain is Peptide chain release factor 1 (359 aa).

Gln236 bears the N5-methylglutamine mark.

This sequence belongs to the prokaryotic/mitochondrial release factor family. Post-translationally, methylated by PrmC. Methylation increases the termination efficiency of RF1.

The protein localises to the cytoplasm. In terms of biological role, peptide chain release factor 1 directs the termination of translation in response to the peptide chain termination codons UAG and UAA. The protein is Peptide chain release factor 1 of Streptococcus agalactiae serotype V (strain ATCC BAA-611 / 2603 V/R).